Reading from the N-terminus, the 361-residue chain is Phospho-N-acetylmuramoyl-pentapeptide-transferase (361 aa).

Helical transmembrane passes span 25–45, 73–93, 97–117, 134–154, 168–188, 200–220, 237–257, 264–284, 289–309, and 338–358; these read RTVL…PAMI, TMGG…WADL, YVWI…VDDY, LFWQ…TAEL, VAVP…IVGT, GLAI…SYVA, AGEL…FLWF, VFMG…VTVI, IVML…MLQV, and QVVV…LSSL.

This sequence belongs to the glycosyltransferase 4 family. MraY subfamily. Requires Mg(2+) as cofactor.

It localises to the cell inner membrane. The enzyme catalyses UDP-N-acetyl-alpha-D-muramoyl-L-alanyl-gamma-D-glutamyl-meso-2,6-diaminopimeloyl-D-alanyl-D-alanine + di-trans,octa-cis-undecaprenyl phosphate = di-trans,octa-cis-undecaprenyl diphospho-N-acetyl-alpha-D-muramoyl-L-alanyl-D-glutamyl-meso-2,6-diaminopimeloyl-D-alanyl-D-alanine + UMP. It functions in the pathway cell wall biogenesis; peptidoglycan biosynthesis. In terms of biological role, catalyzes the initial step of the lipid cycle reactions in the biosynthesis of the cell wall peptidoglycan: transfers peptidoglycan precursor phospho-MurNAc-pentapeptide from UDP-MurNAc-pentapeptide onto the lipid carrier undecaprenyl phosphate, yielding undecaprenyl-pyrophosphoryl-MurNAc-pentapeptide, known as lipid I. The sequence is that of Phospho-N-acetylmuramoyl-pentapeptide-transferase from Nitrosospira multiformis (strain ATCC 25196 / NCIMB 11849 / C 71).